The sequence spans 156 residues: MKICLLCVGRLSIGYLREGAADFEARLQRYLPVRIVELKEEKSGKNDAEYIRRQEGRRILEKIPAGSFVIALDERGRSVSSEKLAALLERHMMESTPELTLIIGGAYGLCDEVKQRADMLMSLSEMTLTHQMARLVLLEQLYRGFTIVRNEPYHNR.

Residues L72, G104, and 123–128 contribute to the S-adenosyl-L-methionine site; that span reads LSEMTL.

This sequence belongs to the RNA methyltransferase RlmH family. In terms of assembly, homodimer.

It localises to the cytoplasm. The catalysed reaction is pseudouridine(1915) in 23S rRNA + S-adenosyl-L-methionine = N(3)-methylpseudouridine(1915) in 23S rRNA + S-adenosyl-L-homocysteine + H(+). Specifically methylates the pseudouridine at position 1915 (m3Psi1915) in 23S rRNA. In Syntrophotalea carbinolica (strain DSM 2380 / NBRC 103641 / GraBd1) (Pelobacter carbinolicus), this protein is Ribosomal RNA large subunit methyltransferase H.